The chain runs to 101 residues: Urease subunit beta (101 aa).

It belongs to the urease beta subunit family. Heterotrimer of UreA (gamma), UreB (beta) and UreC (alpha) subunits. Three heterotrimers associate to form the active enzyme.

Its subcellular location is the cytoplasm. The enzyme catalyses urea + 2 H2O + H(+) = hydrogencarbonate + 2 NH4(+). The protein operates within nitrogen metabolism; urea degradation; CO(2) and NH(3) from urea (urease route): step 1/1. This is Urease subunit beta from Chelativorans sp. (strain BNC1).